Consider the following 356-residue polypeptide: Histidinol-phosphate aminotransferase (356 aa).

N6-(pyridoxal phosphate)lysine is present on K214.

Belongs to the class-II pyridoxal-phosphate-dependent aminotransferase family. Histidinol-phosphate aminotransferase subfamily. Homodimer. Pyridoxal 5'-phosphate serves as cofactor.

It catalyses the reaction L-histidinol phosphate + 2-oxoglutarate = 3-(imidazol-4-yl)-2-oxopropyl phosphate + L-glutamate. It participates in amino-acid biosynthesis; L-histidine biosynthesis; L-histidine from 5-phospho-alpha-D-ribose 1-diphosphate: step 7/9. In Escherichia coli O17:K52:H18 (strain UMN026 / ExPEC), this protein is Histidinol-phosphate aminotransferase.